Consider the following 185-residue polypeptide: Elongation factor P (185 aa).

Belongs to the elongation factor P family.

The protein localises to the cytoplasm. The protein operates within protein biosynthesis; polypeptide chain elongation. Functionally, involved in peptide bond synthesis. Stimulates efficient translation and peptide-bond synthesis on native or reconstituted 70S ribosomes in vitro. Probably functions indirectly by altering the affinity of the ribosome for aminoacyl-tRNA, thus increasing their reactivity as acceptors for peptidyl transferase. In Bacillus cereus (strain B4264), this protein is Elongation factor P.